The sequence spans 212 residues: Orotate phosphoribosyltransferase (212 aa).

Residues arginine 97, lysine 101, histidine 103, and 123–131 (EDLISTGGS) each bind 5-phospho-alpha-D-ribose 1-diphosphate. An orotate-binding site is contributed by serine 127.

The protein belongs to the purine/pyrimidine phosphoribosyltransferase family. PyrE subfamily. Homodimer. It depends on Mg(2+) as a cofactor.

It carries out the reaction orotidine 5'-phosphate + diphosphate = orotate + 5-phospho-alpha-D-ribose 1-diphosphate. It functions in the pathway pyrimidine metabolism; UMP biosynthesis via de novo pathway; UMP from orotate: step 1/2. Catalyzes the transfer of a ribosyl phosphate group from 5-phosphoribose 1-diphosphate to orotate, leading to the formation of orotidine monophosphate (OMP). The protein is Orotate phosphoribosyltransferase of Phocaeicola vulgatus (strain ATCC 8482 / DSM 1447 / JCM 5826 / CCUG 4940 / NBRC 14291 / NCTC 11154) (Bacteroides vulgatus).